The chain runs to 3112 residues: Genome polyprotein (3112 aa).

Positions 234 to 383 constitute a Peptidase S30 domain; sequence KLTQRRANKI…PDCLEGLTYY (150 aa). Residues H286, D301, and S333 each act as for P1 proteinase activity in the active site. The Peptidase C6 domain occupies 729-850; sequence TLVPKSGFCY…IETFKDYRIG (122 aa). Catalysis depends on for helper component proteinase activity residues C737 and H809. The 152-residue stretch at 1278–1429 folds into the Helicase ATP-binding domain; the sequence is NIATGAGNEF…CVPTNHKVDV (152 aa). 1291-1298 lines the ATP pocket; it reads GDVGSGKS. Residues 1379 to 1382 carry the DECH box motif; that stretch reads DECH. Residues 1444 to 1627 enclose the Helicase C-terminal domain; that stretch reads SIDSHAEGLR…EVNFVTREQV (184 aa). The Peptidase C4 domain maps to 2096-2311; sequence DDNYVPHSRC…ISWKGVPTNM (216 aa). Active-site for nuclear inclusion protein A activity residues include H2140, D2174, and C2243. The 119-residue stretch at 2569–2687 folds into the RdRp catalytic domain; the sequence is WKFIDADGSR…NAPQGVCETI (119 aa). Residues 2818 to 2867 form a disordered region; sequence HSGADQSGVVKDQTGDKAEGSGTKTEDPPNQTTDPVNNPSNGGNKDAPQN. Residues 2830-2844 show a composition bias toward basic and acidic residues; it reads QTGDKAEGSGTKTED. Positions 2845–2867 are enriched in polar residues; the sequence is PPNQTTDPVNNPSNGGNKDAPQN.

The protein belongs to the potyviridae genome polyprotein family. In terms of processing, VPg is uridylylated by the polymerase and is covalently attached to the 5'-end of the genomic RNA. This uridylylated form acts as a nucleotide-peptide primer for the polymerase. Genome polyprotein of potyviruses undergoes post-translational proteolytic processing by the main proteinase NIa-pro resulting in the production of at least ten individual proteins. The P1 proteinase and the HC-pro cleave only their respective C-termini autocatalytically. 6K1 is essential for proper proteolytic separation of P3 from CI.

The protein resides in the host cytoplasmic vesicle. It localises to the virion. It catalyses the reaction RNA(n) + a ribonucleoside 5'-triphosphate = RNA(n+1) + diphosphate. The enzyme catalyses Hydrolyzes glutaminyl bonds, and activity is further restricted by preferences for the amino acids in P6 - P1' that vary with the species of potyvirus, e.g. Glu-Xaa-Xaa-Tyr-Xaa-Gln-|-(Ser or Gly) for the enzyme from tobacco etch virus. The natural substrate is the viral polyprotein, but other proteins and oligopeptides containing the appropriate consensus sequence are also cleaved.. The catalysed reaction is Hydrolyzes a Gly-|-Gly bond at its own C-terminus, commonly in the sequence -Tyr-Xaa-Val-Gly-|-Gly, in the processing of the potyviral polyprotein.. Required for aphid transmission and also has proteolytic activity. Only cleaves a Gly-Gly dipeptide at its own C-terminus. Interacts with virions and aphid stylets. Acts as a suppressor of RNA-mediated gene silencing, also known as post-transcriptional gene silencing (PTGS), a mechanism of plant viral defense that limits the accumulation of viral RNAs. May have RNA-binding activity. In terms of biological role, has helicase activity. It may be involved in replication. Its function is as follows. Indispensable for virus replication. Functionally, mediates the cap-independent, EIF4E-dependent translation of viral genomic RNAs. Binds to the cap-binding site of host EIF4E and thus interferes with the host EIF4E-dependent mRNA export and translation. VPg-RNA directly binds EIF4E and is a template for transcription. Also forms trimeric complexes with EIF4E-EIF4G, which are templates for translation. Has RNA-binding and proteolytic activities. In terms of biological role, an RNA-dependent RNA polymerase that plays an essential role in the virus replication. Its function is as follows. Involved in aphid transmission, cell-to-cell and systemis movement, encapsidation of the viral RNA and in the regulation of viral RNA amplification. The protein is Genome polyprotein of Triticum aestivum (Wheat).